Consider the following 133-residue polypeptide: ATP synthase epsilon chain (133 aa).

The protein belongs to the ATPase epsilon chain family. In terms of assembly, F-type ATPases have 2 components, CF(1) - the catalytic core - and CF(0) - the membrane proton channel. CF(1) has five subunits: alpha(3), beta(3), gamma(1), delta(1), epsilon(1). CF(0) has three main subunits: a, b and c.

The protein localises to the cell membrane. Functionally, produces ATP from ADP in the presence of a proton gradient across the membrane. This is ATP synthase epsilon chain (atpC) from Mycoplasma genitalium (strain ATCC 33530 / DSM 19775 / NCTC 10195 / G37) (Mycoplasmoides genitalium).